Reading from the N-terminus, the 219-residue chain is Transmembrane emp24 domain-containing protein 10 (219 aa).

Residues 1–31 form the signal peptide; it reads MSGWSGPLARRGPGPLALLFLFLLGPSSVLA. The segment at 1–142 is required for interaction with STX17; it reads MSGWSGPLAR…KNYEEIAKVE (142 aa). At 32–185 the chain is on the lumenal side; that stretch reads ISFHLPVNSR…RDTNESTNTR (154 aa). Positions 41-193 constitute a GOLD domain; that stretch reads RKCLREEIHK…TRVLYFSIFS (153 aa). The required for TMED10 and TMED2 cis-Golgi network localization stretch occupies residues 147 to 178; sequence LEVELRRLEDLSESIVNDFAYMKKREEEMRDT. A dimethylated arginine mark is found at R171 and R176. N-linked (GlcNAc...) asparagine glycosylation occurs at N179. Residues 186–206 traverse the membrane as a helical segment; the sequence is VLYFSIFSMFCLIGLATWQVF. An interaction with COPG1 region spans residues 204 to 219; the sequence is QVFYLRRFFKAKKLIE. Residues 207 to 219 are Cytoplasmic-facing; the sequence is YLRRFFKAKKLIE. Residues 207-219 form an interaction with ARF1 and IL1B region; it reads YLRRFFKAKKLIE. The COPII vesicle coat-binding signature appears at 211-212; it reads FF. The COPI vesicle coat-binding motif lies at 211 to 219; it reads FFKAKKLIE.

This sequence belongs to the EMP24/GP25L family. Predominantly dimeric and to a lesser extent monomeric in the ER. Monomer and dimer in ERGIC and cis-Golgi network. Forms homooligomer (via GOLD domain); the assembly is promoted by direct binding with leaderless cargos and may form a protein channel that facilitates cargo entry into the ERGIC. Forms heterooligomeric complexes with other members of the p24 family such as TMED2, TMED7 and TMED9. Interacts (via GOLD domain) with TMED2 (via GOLD domain); the complex is required for export of TMED10 from the ER to the cis-Golgi network; the complex is proposed to be involved in cis-Golgi network dynamics and / or biogenesis. Associates with the COPI vesicle coat subunits (coatomer). Tetramerization of the cytoplasmic domain at the Golgi membrane in vitro; the complex is proposed to interact with COPI coatomer and induce budding of the vesicles. Interacts with COPG1; the interaction involves TMED10 homodimer. Interacts with ARF1 (GDP-bound); the interaction probably involves a TMED10 oligomer. Interacts with SEC23A, SEC24B, SEC24C and SEC24D components of the coat protein complex II/COPII, indicative of an association of TMED10 with the COPII vesicle coat. Interacts with CD59. Interacts with MPPE1/PGAP5; the complex might recruit and sort GPI-anchored proteins to the ER-exit site, or the interaction might lead to recycling of PGAP5 between the ER and the Golgi. Interacts with F2LR1/PAR2. Interacts with KDELR2/ERD2; the interaction is disrupted by KDELR2 ligand. Found in a complex composed at least of SURF4, TMED2 and TMED10. Associates with the presenilin-dependent gamma-secretase complex. Interacts with STX17; the interaction is direct. Interacts with IL-1; the interaction is direct. Interacts with RAB21 (active GTP-bound form); the interaction is indirect and regulates TMED10 abundance and localization at the Golgi.

The protein resides in the endoplasmic reticulum membrane. It is found in the endoplasmic reticulum-Golgi intermediate compartment membrane. It localises to the golgi apparatus membrane. The protein localises to the golgi apparatus. Its subcellular location is the cis-Golgi network membrane. The protein resides in the trans-Golgi network membrane. It is found in the cytoplasmic vesicle. It localises to the secretory vesicle membrane. The protein localises to the cell membrane. Its subcellular location is the melanosome. Functionally, cargo receptor involved in protein vesicular trafficking and quality control in the endoplasmic reticulum (ER) and Golgi. The p24 protein family is a group of transmembrane proteins that bind coat protein complex I/COPI and coat protein complex II/COPII involved in vesicular trafficking between the membranes. Acts at the lumenal side for incorporation of secretory cargo molecules into transport vesicles and involved in vesicle coat formation at the cytoplasmic side. Mainly functions in the early secretory pathway and cycles between the ER, ER-Golgi intermediate compartment (ERGIC) and Golgi, mediating cargo transport through COPI and COPII-coated vesicles. In COPII vesicle-mediated anterograde transport, involved in the transport of GPI-anchored proteins by acting together with TMED2 as their cargo receptor; the function specifically implies SEC24C and SEC24D of the COPII vesicle coat and lipid raft-like microdomains of the ER. Recognizes GPI anchors structural remodeled in the ER by the GPI inositol-deacylase/PGAP1 and the metallophosphoesterase MPPE1/PGAP5. In COPI vesicle-mediated retrograde transport, involved in the biogenesis of COPI vesicles and vesicle coat recruitment. Involved in trafficking of amyloid beta A4 protein and soluble APP-beta release (independent from the modulation of gamma-secretase activity). Involved in the KDELR2-mediated retrograde transport of the toxin A subunit (CTX-A-K63)together with COPI and the COOH terminus of KDELR2. On Golgi membranes, acts as a primary receptor for ARF1-GDP, a GTP-binding protein involved in COPI-vesicle formation. Increases coatomer-dependent GTPase-activating activity of ARFGAP2 which mediates the hydrolysis of ARF1-bound GTP and therefore modulates protein trafficking from the Golgi apparatus. Involved in the exocytic trafficking of G protein-coupled receptors F2LR1/PAR2 (trypsin and tryspin-like enzyme receptor), OPRM1 (opioid receptor) and P2RY4 (UTD and UDP receptor) from the Golgi to the plasma membrane, thus contributing to receptor resensitization. In addition to its cargo receptor activity, may also act as a protein channel after oligomerization, facilitating the post-translational entry of leaderless cytoplasmic cargo into the ERGIC. Involved in the translocation into ERGIC, the vesicle entry and the secretion of leaderless cargos (lacking the secretion signal sequence), including the mature form of interleukin 1/IL-1 family members, the alpha-crystallin B chain HSPB5, the carbohydrate-binding proteins galectin-1/LGALS1 and galectin-3/LGALS3, the microtubule-associated protein Tau/MAPT, and the annexin A1/ANXA1; the translocation process is dependent on cargo protein unfolding and enhanced by chaperones HSP90AB1 and HSP90B1/GRP9. Could also associates with the presenilin-dependent gamma-secretase complex in order to regulate gamma-cleavages of the amyloid beta A4 protein to yield amyloid-beta 40/Abeta40. The protein is Transmembrane emp24 domain-containing protein 10 (TMED10) of Oryctolagus cuniculus (Rabbit).